Consider the following 398-residue polypeptide: Tryptophan synthase beta chain (398 aa).

Position 90 is an N6-(pyridoxal phosphate)lysine (K90).

The protein belongs to the TrpB family. Tetramer of two alpha and two beta chains. It depends on pyridoxal 5'-phosphate as a cofactor.

The enzyme catalyses (1S,2R)-1-C-(indol-3-yl)glycerol 3-phosphate + L-serine = D-glyceraldehyde 3-phosphate + L-tryptophan + H2O. It functions in the pathway amino-acid biosynthesis; L-tryptophan biosynthesis; L-tryptophan from chorismate: step 5/5. Its function is as follows. The beta subunit is responsible for the synthesis of L-tryptophan from indole and L-serine. This is Tryptophan synthase beta chain from Anoxybacillus flavithermus (strain DSM 21510 / WK1).